We begin with the raw amino-acid sequence, 969 residues long: MTESPTTSPATGSGAAAPDSDAPPYRYTAALAGRIEGSWQDTWAKLGTFNVPNPVGSLAPTDGTPVPEDKLFVQDMFPYPSGEGLHVGHPLGYIATDVYARYFRMTGRNVLHALGFDAFGLPAEQYAVQTGTHPRTRTEANVVNFRRQLGRLGLGHDSRRSFSTTDVEFYKWTQWIFLQIYNAWFDPAANKARPIAELVAEFDSGARSLDDGRNWSELSAGERADVIDSHRLVYRADSMVNWCPGLGTVLANEEVTADGRSDRGNFPVFRKRLRQWMMRITAYSDRLLDDLDLLDWPEPVKTMQRNWIGRSTGAKALFAATGADGAALDIEVFTTRPDTLFGATYMVLAPEHELVDELVAPAWPDGTDPRWTYGAATPGESVAAYRRAIASKSDLERQESKAKTGVFLGSYATNPTNGKPVPIFIADYVLAGYGTGAIMAVPGHDQRDWDFAHEFGLPIVEVIAGGDISEGAYAGDGVLVNSGYLDGLDVAAAKEAITARLEAEGRGCARVEYKLRDWLFARQRYWGEPFPIVYDSDGRPHALDEAALPVELPDVPDYSPVLFDPDDADSEPSPPLAKATDWVHVELDLGDGLKPYSRDTNVMPQWAGSSWYELRYTDPHNSERFCAKENEAYWMGPRPAEHGPQDPGGVDLYVGGAEHAVLHLLYARFWHKVLYDLGHVSSREPYRRLVNQGYIQAFAYTDSRGSYVPAEEVVERDGRFFYRGPDGEIEVFQEFGKIGKSLKNSISPDEICDDYGADTLRVYEMSMGPLEASRPWATKDVVGAHRFLQRVWRLVVDEQTGETRVVDGAGRDLPTGTLRLLHRTIAGVSEDYAALRNNTAVAKLIEYTNHLTKEHRDAVPRAAVEPLVLMLAPLAPHMAEELWLRLGHTTSLAHGPFPVADPAYLVEDTVEYPVQVNGKVRGRVTVAADADRDTLEAAALADEKVLAFLAGAQPRKVIVVPGRLVNLVV.

The segment at 1–23 (MTESPTTSPATGSGAAAPDSDAP) is disordered. Positions 78 to 89 (PYPSGEGLHVGH) match the 'HIGH' region motif. The short motif at 737–741 (KIGKS) is the 'KMSKS' region element. Lys740 is a binding site for ATP.

The protein belongs to the class-I aminoacyl-tRNA synthetase family.

Its subcellular location is the cytoplasm. The enzyme catalyses tRNA(Leu) + L-leucine + ATP = L-leucyl-tRNA(Leu) + AMP + diphosphate. The sequence is that of Leucine--tRNA ligase from Mycolicibacterium paratuberculosis (strain ATCC BAA-968 / K-10) (Mycobacterium paratuberculosis).